The following is a 421-amino-acid chain: U-box domain-containing protein 25 (421 aa).

Residues 13 to 88 (QIPYHFRCPI…QEWCVANRSN (76 aa)) enclose the U-box domain.

It catalyses the reaction S-ubiquitinyl-[E2 ubiquitin-conjugating enzyme]-L-cysteine + [acceptor protein]-L-lysine = [E2 ubiquitin-conjugating enzyme]-L-cysteine + N(6)-ubiquitinyl-[acceptor protein]-L-lysine.. Its pathway is protein modification; protein ubiquitination. Functionally, functions as an E3 ubiquitin ligase. The protein is U-box domain-containing protein 25 (PUB25) of Arabidopsis thaliana (Mouse-ear cress).